The sequence spans 111 residues: Large ribosomal subunit protein uL23 (111 aa).

It belongs to the universal ribosomal protein uL23 family. As to quaternary structure, part of the 50S ribosomal subunit. Contacts protein L29, and trigger factor when it is bound to the ribosome.

Its function is as follows. One of the early assembly proteins it binds 23S rRNA. One of the proteins that surrounds the polypeptide exit tunnel on the outside of the ribosome. Forms the main docking site for trigger factor binding to the ribosome. The protein is Large ribosomal subunit protein uL23 of Nitrosomonas eutropha (strain DSM 101675 / C91 / Nm57).